We begin with the raw amino-acid sequence, 325 residues long: N-acetyl-gamma-glutamyl-phosphate reductase (325 aa).

Residue C131 is part of the active site.

It belongs to the NAGSA dehydrogenase family. Type 1 subfamily.

The protein localises to the cytoplasm. The enzyme catalyses N-acetyl-L-glutamate 5-semialdehyde + phosphate + NADP(+) = N-acetyl-L-glutamyl 5-phosphate + NADPH + H(+). Its pathway is amino-acid biosynthesis; L-arginine biosynthesis; N(2)-acetyl-L-ornithine from L-glutamate: step 3/4. Catalyzes the NADPH-dependent reduction of N-acetyl-5-glutamyl phosphate to yield N-acetyl-L-glutamate 5-semialdehyde. This is N-acetyl-gamma-glutamyl-phosphate reductase from Methylobacterium sp. (strain 4-46).